Here is a 1076-residue protein sequence, read N- to C-terminus: JmjC domain-containing histone demethylation protein 1 (1076 aa).

One can recognise a JmjC domain in the interval 93–265 (FSQTPLEDLV…TQLRVYQVEN (173 aa)). T159 is a binding site for substrate. Residues H162 and D164 each coordinate Fe cation. Residue K179 participates in substrate binding. Residue H233 participates in Fe cation binding. Disordered regions lie at residues 598 to 748 (FEEE…DPVV) and 789 to 1056 (KIEP…KIPS). A compositionally biased stretch (acidic residues) spans 610 to 634 (DQEEEEYDAEEPEDQEEEEEDEYQA). Residues 653–680 (AKNDESEEVSVKKDKKEKMEKVEKDEKR) are compositionally biased toward basic and acidic residues. A compositionally biased stretch (basic residues) spans 681–698 (RNSKSKKDKISKEKKKKE). 2 stretches are compositionally biased toward basic and acidic residues: residues 699–714 (RERIELESQLDAELRA) and 789–811 (KIEPKRGSEEGSQSREQSMEPEH). The span at 935 to 946 (ASAPSSRHSSIS) shows a compositional bias: low complexity. 2 stretches are compositionally biased toward polar residues: residues 957–990 (FNSSRNSSIDTPYTPTTVTPSRSSWLPNTSSINR) and 1004–1019 (DSLSPINIASSPTYPT). Residues 1044 to 1056 (QHHDDGHKHKIPS) show a composition bias toward basic and acidic residues.

It belongs to the JHDM1 histone demethylase family. Fe(2+) serves as cofactor.

Its subcellular location is the nucleus. The catalysed reaction is N(6),N(6)-dimethyl-L-lysyl(36)-[histone H3] + 2 2-oxoglutarate + 2 O2 = L-lysyl(36)-[histone H3] + 2 formaldehyde + 2 succinate + 2 CO2. Functionally, histone demethylase that specifically demethylates 'Lys-36' of histone H3, thereby playing a central role in histone code. Has a role in regulating lifespan. In Caenorhabditis elegans, this protein is JmjC domain-containing histone demethylation protein 1 (jhdm-1).